Here is a 357-residue protein sequence, read N- to C-terminus: Cytoplasmic tRNA 2-thiolation protein 1 (357 aa).

A disordered region spans residues 314 to 348; sequence GVSRTRGRRGEKAGLHPDVGRGGGGGSSGPAEVAS. Basic and acidic residues predominate over residues 321–332; that stretch reads RRGEKAGLHPDV.

This sequence belongs to the TtcA family. CTU1/NCS6/ATPBD3 subfamily.

The protein localises to the cytoplasm. The protein operates within tRNA modification; 5-methoxycarbonylmethyl-2-thiouridine-tRNA biosynthesis. Its function is as follows. Plays a central role in 2-thiolation of mcm(5)S(2)U at tRNA wobble positions of tRNA(Lys), tRNA(Glu) and tRNA(Gln). Directly binds tRNAs and probably acts by catalyzing adenylation of tRNAs, an intermediate required for 2-thiolation. It is unclear whether it acts as a sulfurtransferase that transfers sulfur from thiocarboxylated URM1 onto the uridine of tRNAs at wobble position. The polypeptide is Cytoplasmic tRNA 2-thiolation protein 1 (Chlamydomonas reinhardtii (Chlamydomonas smithii)).